Here is a 575-residue protein sequence, read N- to C-terminus: Membrane protein insertase YidC (575 aa).

6 consecutive transmembrane segments (helical) span residues 6–26 (VFLI…WGKD), 357–377 (FSIM…LHSF), 381–401 (WGWA…PLSA), 448–468 (GGCL…WVLV), 490–510 (PYFI…KLTP), and 526–546 (PLVF…YWVV).

The protein belongs to the OXA1/ALB3/YidC family. Type 1 subfamily. As to quaternary structure, interacts with the Sec translocase complex via SecD. Specifically interacts with transmembrane segments of nascent integral membrane proteins during membrane integration.

Its subcellular location is the cell inner membrane. Its function is as follows. Required for the insertion and/or proper folding and/or complex formation of integral membrane proteins into the membrane. Involved in integration of membrane proteins that insert both dependently and independently of the Sec translocase complex, as well as at least some lipoproteins. Aids folding of multispanning membrane proteins. This chain is Membrane protein insertase YidC, found in Xanthomonas campestris pv. campestris (strain B100).